The chain runs to 276 residues: Orotidine 5'-phosphate decarboxylase (276 aa).

K96 functions as the Proton donor in the catalytic mechanism.

The protein belongs to the OMP decarboxylase family. Type 2 subfamily.

It carries out the reaction orotidine 5'-phosphate + H(+) = UMP + CO2. It functions in the pathway pyrimidine metabolism; UMP biosynthesis via de novo pathway; UMP from orotate: step 2/2. The sequence is that of Orotidine 5'-phosphate decarboxylase from Porphyromonas gingivalis (strain ATCC BAA-308 / W83).